The chain runs to 176 residues: Macro domain-containing protein mll7730 (176 aa).

One can recognise a Macro domain in the interval 1-174 (MSKALDRIRI…LYLRAVAALR (174 aa)).

This sequence belongs to the MacroD-type family.

The protein is Macro domain-containing protein mll7730 of Mesorhizobium japonicum (strain LMG 29417 / CECT 9101 / MAFF 303099) (Mesorhizobium loti (strain MAFF 303099)).